The sequence spans 141 residues: Large ribosomal subunit protein uL11 (141 aa).

This sequence belongs to the universal ribosomal protein uL11 family. In terms of assembly, part of the ribosomal stalk of the 50S ribosomal subunit. Interacts with L10 and the large rRNA to form the base of the stalk. L10 forms an elongated spine to which L12 dimers bind in a sequential fashion forming a multimeric L10(L12)X complex. One or more lysine residues are methylated.

Forms part of the ribosomal stalk which helps the ribosome interact with GTP-bound translation factors. In Chlamydia abortus (strain DSM 27085 / S26/3) (Chlamydophila abortus), this protein is Large ribosomal subunit protein uL11.